Consider the following 117-residue polypeptide: Large ribosomal subunit protein bL20 (117 aa).

It belongs to the bacterial ribosomal protein bL20 family.

Binds directly to 23S ribosomal RNA and is necessary for the in vitro assembly process of the 50S ribosomal subunit. It is not involved in the protein synthesizing functions of that subunit. In Trichlorobacter lovleyi (strain ATCC BAA-1151 / DSM 17278 / SZ) (Geobacter lovleyi), this protein is Large ribosomal subunit protein bL20.